Reading from the N-terminus, the 822-residue chain is MEENPLQCTICKNEFEEPILLSCQHTTCRKCSTGSPSCKSCSPIPSTSRSHTPHPDKLAAFLLDASKEEMEECANCEQISLPMFYCETCQQSLCLVCRNVTHQARMFSSHKIISSDERSKVYSSSLCKDHNEPYILYCSDVRKLVCIQCFNGRPLEERHSFISIEQGHRLCLERIEQSAAKLRFYQSERQEELNVRQRVLDENASNFDDARASLYQLCQQIIDTVMTTRETLAKELVKQQEQSDEQCKRQIKEIEAVMGPVRLCLFSAQILCTTASKLDVLQLCPQLQKRIGVLLDKTIDKLPVSSTPDSIEVRSDLAKALEPFLGMSAAWCPISVSREGSSSNSYKRGSGSHKAISMLSKFQATIDLAGAFGELFGKVEHPLRQLVTALSSTSQQVLETQRDLTIRRCIIEKEDVEKLVKTCKKIEAGLGMHSAALDGMQSEMQEIWQEQLDRVRRQQIIYREKVEEILNLRETARQILTAAKQLVPYVSCILNMNAMIDPKRCHPPDPAPMESICLEITGIEPNSQNRILAIEKEEENRRLNQEAKKKEELAGQSAVMKTLKHGKIKRKEMNRMMLNTNRERSPGGTDTALTSPCIRRLTTALKEETASELDAEEFLDEIFELSGEQYDEVVDGTLTEEDRCSSALLLSMEISSDSISPLPSLEQLLGRIPLASRVTSNIGFSRGAMLQSLNDVFALQKPPTPENISVSEERNVLASAVRNAEKRKSGAGLPTNSDKDEVIEKEEIEKETEKEKKKVIRRRVKKVSEPSEEEVTTFTFNAPPDCPFVPQEIFESDEKLGTFEAKERVLQSLKQKMNQKTE.

The RING-type zinc finger occupies 8-42 (CTICKNEFEEPILLSCQHTTCRKCSTGSPSCKSCS). The B box-type 1; atypical zinc-finger motif lies at 68–115 (EEMEECANCEQISLPMFYCETCQQSLCLVCRNVTHQARMFSSHKIISS). Residues Cys73, Cys76, Cys97, and His102 each coordinate Zn(2+). The segment at 122–164 (YSSSLCKDHNEPYILYCSDVRKLVCIQCFNGRPLEERHSFISI) adopts a B box-type 2; degenerate zinc-finger fold. 2 coiled-coil regions span residues 526-558 (NSQN…GQSA) and 738-769 (DKDE…KVSE).

In Caenorhabditis elegans, this protein is Probable RING finger protein 207 homolog.